Consider the following 136-residue polypeptide: Histone H3.2 (136 aa).

The disordered stretch occupies residues 1–20 (MARTKQTARKSTGGKAPRKQ). An N6-methylated lysine modification is found at Lys-5. Position 10 is an N6-acetyllysine; alternate (Lys-10). Residue Lys-10 is modified to N6-methylated lysine; alternate. Ser-11 is subject to Phosphoserine. Thr-12 bears the Phosphothreonine mark. At Lys-15 the chain carries N6-acetyllysine. 2 positions are modified to N6-acetyllysine; alternate: Lys-19 and Lys-24. An N6-methylated lysine; alternate mark is found at Lys-19 and Lys-24. Lys-37 bears the N6-methylated lysine mark.

Belongs to the histone H3 family. In terms of assembly, the nucleosome is a histone octamer containing two molecules each of H2A, H2B, H3 and H4 assembled in one H3-H4 heterotetramer and two H2A-H2B heterodimers. The octamer wraps approximately 147 bp of DNA. In terms of processing, acetylation is generally linked to gene activation. Can be acetylated to form H3K9ac, H3K14ac, H3K18ac and H3K23ac. H3K9ac could compete with H3K9me and prevent gene silencing. H3K9ac is restricted to euchromatin. Methylated to form mainly H3K4me, H3K9me, H3K18me, H3K23me and H3K36me. H3K4me1/2/3, H3K9me3 and H3K36me1/2/3 are typical marks for euchromatin, whereas heterochromatic chromocenters are enriched in H3K9me1/2. H2BK143ub1 is probably prerequisite for H3K4me. Post-translationally, can be phosphorylated to form H3S10ph and H3T11ph.

The protein localises to the nucleus. The protein resides in the chromosome. Its function is as follows. Core component of nucleosome. Nucleosomes wrap and compact DNA into chromatin, limiting DNA accessibility to the cellular machineries which require DNA as a template. Histones thereby play a central role in transcription regulation, DNA repair, DNA replication and chromosomal stability. DNA accessibility is regulated via a complex set of post-translational modifications of histones, also called histone code, and nucleosome remodeling. This Cichorium intybus (Chicory) protein is Histone H3.2.